The primary structure comprises 351 residues: Holliday junction branch migration complex subunit RuvB (351 aa).

The interval Met1–Tyr186 is large ATPase domain (RuvB-L). Residues Ile25, Arg26, Gly67, Lys70, Thr71, Thr72, Glu133–Phe135, Arg176, Tyr186, and Arg223 each bind ATP. A Mg(2+)-binding site is contributed by Thr71. A small ATPAse domain (RuvB-S) region spans residues Arg187–Asn257. The tract at residues Ile260 to Glu351 is head domain (RuvB-H). DNA contacts are provided by Arg296, Arg315, and Arg320.

Belongs to the RuvB family. In terms of assembly, homohexamer. Forms an RuvA(8)-RuvB(12)-Holliday junction (HJ) complex. HJ DNA is sandwiched between 2 RuvA tetramers; dsDNA enters through RuvA and exits via RuvB. An RuvB hexamer assembles on each DNA strand where it exits the tetramer. Each RuvB hexamer is contacted by two RuvA subunits (via domain III) on 2 adjacent RuvB subunits; this complex drives branch migration. In the full resolvosome a probable DNA-RuvA(4)-RuvB(12)-RuvC(2) complex forms which resolves the HJ.

It localises to the cytoplasm. It carries out the reaction ATP + H2O = ADP + phosphate + H(+). Functionally, the RuvA-RuvB-RuvC complex processes Holliday junction (HJ) DNA during genetic recombination and DNA repair, while the RuvA-RuvB complex plays an important role in the rescue of blocked DNA replication forks via replication fork reversal (RFR). RuvA specifically binds to HJ cruciform DNA, conferring on it an open structure. The RuvB hexamer acts as an ATP-dependent pump, pulling dsDNA into and through the RuvAB complex. RuvB forms 2 homohexamers on either side of HJ DNA bound by 1 or 2 RuvA tetramers; 4 subunits per hexamer contact DNA at a time. Coordinated motions by a converter formed by DNA-disengaged RuvB subunits stimulates ATP hydrolysis and nucleotide exchange. Immobilization of the converter enables RuvB to convert the ATP-contained energy into a lever motion, pulling 2 nucleotides of DNA out of the RuvA tetramer per ATP hydrolyzed, thus driving DNA branch migration. The RuvB motors rotate together with the DNA substrate, which together with the progressing nucleotide cycle form the mechanistic basis for DNA recombination by continuous HJ branch migration. Branch migration allows RuvC to scan DNA until it finds its consensus sequence, where it cleaves and resolves cruciform DNA. The chain is Holliday junction branch migration complex subunit RuvB from Coxiella burnetii (strain CbuG_Q212) (Coxiella burnetii (strain Q212)).